Consider the following 317-residue polypeptide: MGEVQREKVAVIIGPTAVGKTKLSIDLAKALNGEIISGDSMQIYRTMDIGTAKVTKEEVDGIPHYMVDIKNPEESFSVAEFQERVRKHIREITERGKLPIIVGGTGLYIQSVLFDYQFTDDAGDAIYREQMEKLALERGVEYVHKKLQEVDPESAERIHANNVRRVIRALEIFHTSGEKMSDQLEKQENELLYDVSLIGLTMDREMLYDRINLRVDIMMDQGLLEEVEGLYNRGIRDCQSIQAIGYKEIYDYFEDRVSLEEAVSQLKTNSRRYAKRQLTWFRNKMDVTWFDVTDGEKTSEILRYXEGKLQLKSNNSK.

Position 14–21 (14–21 (GPTAVGKT)) interacts with ATP. 16 to 21 (TAVGKT) serves as a coordination point for substrate. The interval 39–42 (DSMQ) is interaction with substrate tRNA.

The protein belongs to the IPP transferase family. Monomer. Mg(2+) is required as a cofactor.

It carries out the reaction adenosine(37) in tRNA + dimethylallyl diphosphate = N(6)-dimethylallyladenosine(37) in tRNA + diphosphate. Its function is as follows. Catalyzes the transfer of a dimethylallyl group onto the adenine at position 37 in tRNAs that read codons beginning with uridine, leading to the formation of N6-(dimethylallyl)adenosine (i(6)A). The chain is tRNA dimethylallyltransferase from Bacillus cereus (strain AH820).